The sequence spans 150 residues: Nucleoside diphosphate kinase (150 aa).

6 residues coordinate ATP: Lys-10, Phe-58, Arg-86, Thr-92, Arg-103, and Asn-113. Catalysis depends on His-116, which acts as the Pros-phosphohistidine intermediate.

Belongs to the NDK family. It depends on Mg(2+) as a cofactor.

It is found in the cytoplasm. It carries out the reaction a 2'-deoxyribonucleoside 5'-diphosphate + ATP = a 2'-deoxyribonucleoside 5'-triphosphate + ADP. The enzyme catalyses a ribonucleoside 5'-diphosphate + ATP = a ribonucleoside 5'-triphosphate + ADP. Its function is as follows. Major role in the synthesis of nucleoside triphosphates other than ATP. The ATP gamma phosphate is transferred to the NDP beta phosphate via a ping-pong mechanism, using a phosphorylated active-site intermediate. This Methanobrevibacter smithii (strain ATCC 35061 / DSM 861 / OCM 144 / PS) protein is Nucleoside diphosphate kinase.